The chain runs to 1035 residues: Valine--tRNA ligase (1035 aa).

The 'HIGH' region motif lies at 45-55 (PNVTGALHLGH). Positions 253–281 (EKLSDANEKEAVDLNKQIEALQKRREERL) form a coiled coil. An ATP-binding site is contributed by K619. Residues 967–1035 (DVEAELARLE…QDILKLQSKK (69 aa)) adopt a coiled-coil conformation.

This sequence belongs to the class-I aminoacyl-tRNA synthetase family. ValS type 1 subfamily. As to quaternary structure, monomer.

It localises to the cytoplasm. The enzyme catalyses tRNA(Val) + L-valine + ATP = L-valyl-tRNA(Val) + AMP + diphosphate. Functionally, catalyzes the attachment of valine to tRNA(Val). As ValRS can inadvertently accommodate and process structurally similar amino acids such as threonine, to avoid such errors, it has a 'posttransfer' editing activity that hydrolyzes mischarged Thr-tRNA(Val) in a tRNA-dependent manner. The polypeptide is Valine--tRNA ligase (Rhodopirellula baltica (strain DSM 10527 / NCIMB 13988 / SH1)).